Reading from the N-terminus, the 256-residue chain is MGLLQDYVIIVTGSASGIGYATSSTALREGAHVFGVDVSPLPADLCDHPNFQSFQGDLTEDSTAQAVVTACTQAFGNRIDGLLNVAGVLDNFASVDAVTDQIWNKCLAVNLTAPVKLMRAVIPIMRTQKRGSIVNVSSKAGISGGAAGVAYTASKHGLIGVTKNVAWRFKEENIRCNAVCPGGVLTNIGSDIDRESFDMEAFETMKPVQLAHMPDQSKGPRITPEEVAQVMIFLVSGLSSKVNGAVIPVDDAWSTI.

Residues Val-11, Asp-57, and Arg-119 each contribute to the NADP(+) site. Ser-137 functions as the Proton donor in the catalytic mechanism. NADP(+) is bound by residues Tyr-151, Lys-155, Gly-183, and Asn-187. The active-site Proton acceptor is Tyr-151. Lys-155 functions as the Lowers pKa of active site Tyr in the catalytic mechanism.

Belongs to the short-chain dehydrogenases/reductases (SDR) family.

It catalyses the reaction 3-hydroxypentacecilide A + A = chrodrimanin C + AH2. It carries out the reaction chrodrimanin F + A = chrodrimanin H + AH2. Its pathway is secondary metabolite biosynthesis; terpenoid biosynthesis. Short-chain dehydrogenase/reductase; part of the gene cluster that mediates the biosynthesis of chrodrimanin B, a meroterpenoid that acts as a potent blocker of insect GABA-gated chloride channels. The first step of the pathway is the biosynthesis of 6-hydroxymellein by the polyketide synthase cdmE. The prenyltransferase cdmH acts as a 6-hydroxymellein 5-farnesyltransferase and produces the hydrophobic metabolite verruculide C. The FAD-dependent monooxygenase cdmI further converts verruculide C into verruculide B. The terpene cyclase cdmG then produced the pentacyclic molecule 3-hydroxypentacecilide A, the backbone structure of chrodrimanin B, via folding the farnesyl moiety of the substrate into the chair-boat conformation. The short-chain dehydrogenase/reductase cdmF functions as the 3-OH dehydrogenase that oxidizes the C-3 hydroxyl group of 3-hydroxypentacecilide A and produces chrodrimanin C, the dehydrogenated product of 3-hydroxypentacecilide A. The cytochrome P450 monooxygenase cdmJ then accepts both 3-hydroxypentacecilide A and chrodrimanin C and functions as a C-7-beta-hydroxylase to produce respectively chrodrimanin H and chrodrimanin F. The dioxygenase cdmA accepts chrodrimanin H to afford chrodrimanin E, which is further transformed to chrodrimanin A by the dioxygenase cdmD. CdmA can also accept chrodrimanin C as substrate to convert it into verruculide A, which is further converted into chrodrimanin T by cdmD. The last step of the biosynthesis is proposed to be performed by the acetyltransferase cdmC which acetylates chrodrimanin A to yield chrodrimanin B. The pathway may also lead to the production of additional shunt products, including chrodrimanins T and U. The polypeptide is Short-chain dehydrogenase/reductase cdmF (Talaromyces verruculosus (Penicillium verruculosum)).